A 95-amino-acid polypeptide reads, in one-letter code: Putative small ubiquitin-related modifier 7 (95 aa).

In terms of domain architecture, Ubiquitin-like spans Ser13–Gly90. Gly90 is covalently cross-linked (Glycyl lysine isopeptide (Gly-Lys) (interchain with K-? in acceptor proteins)).

The protein belongs to the ubiquitin family. SUMO subfamily. Interacts with SAE2, SCE1, SIZ1 and MMS21 Covalently attached to a number of proteins.

The protein localises to the nucleus. The protein resides in the cytoplasm. Functionally, ubiquitin-like protein which can be covalently attached to target lysines as a monomer. Does not seem to be involved in protein degradation and may function as an antagonist of ubiquitin in the degradation process. The sequence is that of Putative small ubiquitin-related modifier 7 (SUMO7) from Arabidopsis thaliana (Mouse-ear cress).